A 793-amino-acid polypeptide reads, in one-letter code: PC3-like endoprotease variant A (793 aa).

Residues 1–29 (MNYRGIYRRRYVFVLLLLVAVVNISYGWT) form the signal peptide. Residues 30–152 (VLKNKDYKRR…QQKILERVKR (123 aa)) constitute a propeptide that is removed on maturation. N62 and N190 each carry an N-linked (GlcNAc...) asparagine glycan. A Peptidase S8 domain is found at 164–486 (MWYLLNTGQA…FGRLDANAMV (323 aa)). Catalysis depends on charge relay system residues D202 and H242. Intrachain disulfides connect C259–C411 and C351–C381. S419 (charge relay system) is an active-site residue. Positions 495–638 (LPAQRKCTAA…EERVIDTQTK (144 aa)) constitute a P/Homo B domain. The cysteines at positions 501 and 527 are disulfide-linked.

This sequence belongs to the peptidase S8 family. Furin subfamily. Predominantly in the body column.

Its function is as follows. Probably involved in the processing of hormone and other protein precursors at sites comprised of pairs of basic amino acid residues. This is PC3-like endoprotease variant A from Hydra vulgaris (Hydra).